The primary structure comprises 328 residues: ATP synthase mitochondrial F1 complex assembly factor 1 (328 aa).

The transit peptide at 1 to 57 directs the protein to the mitochondrion; it reads MAAVVVAAAGGAGPAVLQVAGLYRGLCAVRSRALGLGLVSPAQLRVFPVRPGSGRPE.

This sequence belongs to the ATP11 family. As to quaternary structure, interacts with ATP5F1B; involved in the assembly of the F1 component of the mitochondrial ATP synthase (ATPase). As to expression, weakly expressed in muscle.

The protein localises to the mitochondrion inner membrane. Has a complex stabilizing activity in the assembly of the mitochondrial F1-F0 complex. The polypeptide is ATP synthase mitochondrial F1 complex assembly factor 1 (Homo sapiens (Human)).